A 257-amino-acid polypeptide reads, in one-letter code: Glucose-1-phosphate cytidylyltransferase (257 aa).

Residues Leu6–Leu10, Gly11–Arg13, Lys23, Ser104, Arg109, and Gly128 contribute to the substrate site. Mg(2+) contacts are provided by Asp129 and Asp234.

It belongs to the glucose-1-phosphate cytidylyltransferase family. As to quaternary structure, homohexamer. It depends on Mg(2+) as a cofactor.

It carries out the reaction alpha-D-glucose 1-phosphate + CTP + H(+) = CDP-D-glucose + diphosphate. The protein operates within nucleotide-sugar biosynthesis; CDP-3,6-dideoxy-D-mannose biosynthesis; CDP-3,6-dideoxy-D-mannose from CTP and alpha-D-glucose 1-phosphate: step 1/5. It functions in the pathway bacterial outer membrane biogenesis; LPS O-antigen biosynthesis. Its function is as follows. Involved in the biosynthesis of the tyvelose, a 3,6-dideoxyhexose found in the O-antigen of the surface lipopolysaccharides. It catalyzes the transfer of a CMP moiety from CTP to glucose 1-phosphate. This enzyme can utilize either CTP or UTP as the nucleotide donor. In Salmonella typhi, this protein is Glucose-1-phosphate cytidylyltransferase (rfbF).